Reading from the N-terminus, the 215-residue chain is MKQNRKNLPIILASSSPARIELLNRIKIIPSQIIPADIDETPNLRELPAPLAIRLAYEKAIKIASQIEASAIIIAADTVAAVGRRILPKATTYEEVKNCIKMLSGRRHRVYTGLCIIKKENDQLTVRQKIVQTIVKFKKLSDEEINFYCSLDEGIDKAGGCKISGYAEAFISFISGSYSNVMGLPLFETVNALTSLGFRCSSIMPAKMNYCHSAT.

Asp-77 (proton acceptor) is an active-site residue.

The protein belongs to the Maf family. The cofactor is a divalent metal cation.

It localises to the cytoplasm. The catalysed reaction is a ribonucleoside 5'-triphosphate + H2O = a ribonucleoside 5'-phosphate + diphosphate + H(+). It carries out the reaction a 2'-deoxyribonucleoside 5'-triphosphate + H2O = a 2'-deoxyribonucleoside 5'-phosphate + diphosphate + H(+). Its function is as follows. Nucleoside triphosphate pyrophosphatase. May have a dual role in cell division arrest and in preventing the incorporation of modified nucleotides into cellular nucleic acids. This chain is Nucleoside triphosphate pyrophosphatase, found in Rickettsia africae (strain ESF-5).